Here is a 205-residue protein sequence, read N- to C-terminus: Small ribosomal subunit protein uS4c (205 aa).

The interval 22 to 42 is disordered; it reads TSKISKKTNTPGEHGQPQNKL. The segment covering 28–42 has biased composition (polar residues); it reads KTNTPGEHGQPQNKL. One can recognise an S4 RNA-binding domain in the interval 94-157; that stretch reads MRLDNIVYRL…ASRDLVKKFV (64 aa).

This sequence belongs to the universal ribosomal protein uS4 family. As to quaternary structure, part of the 30S ribosomal subunit. Contacts protein S5. The interaction surface between S4 and S5 is involved in control of translational fidelity.

It is found in the plastid. Its subcellular location is the chloroplast. Functionally, one of the primary rRNA binding proteins, it binds directly to 16S rRNA where it nucleates assembly of the body of the 30S subunit. With S5 and S12 plays an important role in translational accuracy. The chain is Small ribosomal subunit protein uS4c (rps4) from Tupiella akineta (Green alga).